The following is a 349-amino-acid chain: Anthranilate phosphoribosyltransferase (349 aa).

5-phospho-alpha-D-ribose 1-diphosphate-binding positions include G82, 85–86 (GD), 92–95 (NVST), 110–118 (KHGNRAVSG), and S122. G82 contributes to the anthranilate binding site. S94 contacts Mg(2+). Position 113 (N113) interacts with anthranilate. R168 lines the anthranilate pocket. Mg(2+) contacts are provided by D227 and E228.

The protein belongs to the anthranilate phosphoribosyltransferase family. In terms of assembly, homodimer. Mg(2+) serves as cofactor.

The catalysed reaction is N-(5-phospho-beta-D-ribosyl)anthranilate + diphosphate = 5-phospho-alpha-D-ribose 1-diphosphate + anthranilate. Its pathway is amino-acid biosynthesis; L-tryptophan biosynthesis; L-tryptophan from chorismate: step 2/5. Its function is as follows. Catalyzes the transfer of the phosphoribosyl group of 5-phosphorylribose-1-pyrophosphate (PRPP) to anthranilate to yield N-(5'-phosphoribosyl)-anthranilate (PRA). This Pseudomonas syringae pv. tomato (strain ATCC BAA-871 / DC3000) protein is Anthranilate phosphoribosyltransferase.